A 335-amino-acid chain; its full sequence is Histidinol-phosphate aminotransferase (335 aa).

Lysine 202 carries the post-translational modification N6-(pyridoxal phosphate)lysine.

The protein belongs to the class-II pyridoxal-phosphate-dependent aminotransferase family. Histidinol-phosphate aminotransferase subfamily. In terms of assembly, homodimer. Requires pyridoxal 5'-phosphate as cofactor.

It catalyses the reaction L-histidinol phosphate + 2-oxoglutarate = 3-(imidazol-4-yl)-2-oxopropyl phosphate + L-glutamate. The protein operates within amino-acid biosynthesis; L-histidine biosynthesis; L-histidine from 5-phospho-alpha-D-ribose 1-diphosphate: step 7/9. The sequence is that of Histidinol-phosphate aminotransferase from Thermotoga sp. (strain RQ2).